Reading from the N-terminus, the 20-residue chain is TSTLSWLDEITMEELERNPY.

It belongs to the cytochrome P450 family. Heme is required as a cofactor.

Its function is as follows. P450-RRI catalyzes the O-dealkylation of 2-ethoxyphenol and 2-methoxyphenol to produce catechol. The cytochrome binds other ortho-substituted phenols, including 2-ethoxyphenol, 2-methylphenol and 2-chlorophenol. The sequence is that of Cytochrome P450-RR1 from Rhodococcus rhodochrous.